The following is a 442-amino-acid chain: NAD(P)H sulfur oxidoreductase (CoA-dependent) (442 aa).

13–14 is an FAD binding site; it reads AA. Arg-24 contacts CoA. Residues 35-36 and 42-44 each bind FAD; these read EA and HAP. CoA contacts are provided by residues 41–45, 62–63, and Arg-72; these read SHAPC and HY. The active-site Redox-active is Cys-45. Val-82, Asp-280, and Ala-298 together coordinate FAD. The CoA site is built by Asn-302 and Lys-358. Tyr-422 contributes to the FAD binding site. Positions 430 and 438 each coordinate CoA.

The protein belongs to the class-III pyridine nucleotide-disulfide oxidoreductase family. In terms of assembly, homodimer. Requires FAD as cofactor.

Its subcellular location is the cytoplasm. It catalyses the reaction hydrogen sulfide + NADP(+) = sulfur + NADPH. It carries out the reaction hydrogen sulfide + NAD(+) = sulfur + NADH. The catalysed reaction is NADP(+) + 2 CoA = CoA-disulfide + NADPH + H(+). The enzyme catalyses NAD(+) + 2 CoA = CoA-disulfide + NADH + H(+). Its function is as follows. Catalyzes the CoA-dependent reduction of elemental sulfur (S(0)) to produce hydrogen sulfide. Can use both NADPH and NADH, but shows a preference for NADPH. May enable S(0) to be used, via sulfide, for iron-sulfur cluster synthesis by SipA. Also shows coenzyme A disulfide reductase (CoADR) activity with both NADH and NADPH. However, CoADR specific activity is about 20-fold lower than the sulfur reduction assay and CoADR activity appears to be an artifactual side reaction and is not thought to have any physiological relevance. Also shows NAD(P)H oxidase activity with both NADH and NADPH. This Pyrococcus furiosus (strain ATCC 43587 / DSM 3638 / JCM 8422 / Vc1) protein is NAD(P)H sulfur oxidoreductase (CoA-dependent).